The sequence spans 31 residues: Cyclotide cter-J (31 aa).

The segment at residues Gly1 to Asp31 is a cross-link (cyclopeptide (Gly-Asp)). 3 disulfide bridges follow: Cys5–Cys21, Cys9–Cys23, and Cys14–Cys28.

Contains 3 disulfide bonds. In terms of processing, this is a cyclic peptide.

Its function is as follows. Probably participates in a plant defense mechanism. The polypeptide is Cyclotide cter-J (Clitoria ternatea (Butterfly pea)).